The chain runs to 99 residues: Transcriptional regulator WhiB2 (99 aa).

The 4Fe-4S Wbl-type domain maps to 33 to 90 (LCAQTDPEAFFPEKGGSTRDAKRVCAKCEVREQCLKWAIDHDERFGIWGGMSERERRR). Residues Cys-34, Cys-57, Cys-60, and Cys-66 each contribute to the [4Fe-4S] cluster site.

It belongs to the WhiB family. Requires [4Fe-4S] cluster as cofactor. Post-translationally, the Fe-S cluster can be nitrosylated by nitric oxide (NO). Upon Fe-S cluster removal intramolecular disulfide bonds are formed.

It localises to the cytoplasm. Acts as a transcriptional regulator. Probably redox-responsive. The apo- but not holo-form probably binds DNA. In Bifidobacterium longum (strain NCC 2705), this protein is Transcriptional regulator WhiB2 (whiB2).